Here is a 445-residue protein sequence, read N- to C-terminus: Anaerobilin synthase (445 aa).

The Radical SAM core domain occupies 52–287 (TASPRKRLVY…LQGCDFMDDA (236 aa)). Residue Tyr-61 coordinates S-adenosyl-L-methionine. [4Fe-4S] cluster-binding residues include Cys-67 and Cys-71. Phe-73 contacts S-adenosyl-L-methionine. Cys-74 contributes to the [4Fe-4S] cluster binding site. Residues Gly-118, 119 to 120 (GT), Glu-151, Gln-178, Arg-190, and Asp-215 each bind S-adenosyl-L-methionine.

This sequence belongs to the anaerobic coproporphyrinogen-III oxidase family. ChuW/HutW subfamily. It depends on [4Fe-4S] cluster as a cofactor.

The enzyme catalyses 2 reduced [flavodoxin] + heme b + 2 S-adenosyl-L-methionine = anaerobilin + 2 oxidized [flavodoxin] + Fe(2+) + 5'-deoxyadenosine + L-methionine + S-adenosyl-L-homocysteine. Its activity is regulated as follows. Inhibited by exposure to molecular oxygen. In terms of biological role, involved in heme degradation and iron utilization under anaerobic conditions. Catalyzes a radical-mediated mechanism facilitating iron liberation and the production of the tetrapyrrole product anaerobilin. Can use heme, mesoheme and deuteroheme as substrates. This Escherichia coli O157:H7 protein is Anaerobilin synthase.